The chain runs to 307 residues: Acetyl-coenzyme A carboxylase carboxyl transferase subunit beta (307 aa).

In terms of domain architecture, CoA carboxyltransferase N-terminal spans 28-297 (LWVKCPDTGQ…TPQPGTAPEP (270 aa)). Residues 286 to 307 (RRTPQPGTAPEPTTPEPLPNAA) are disordered. The segment covering 292-307 (GTAPEPTTPEPLPNAA) has biased composition (pro residues).

The protein belongs to the AccD/PCCB family. Acetyl-CoA carboxylase is a heterohexamer composed of biotin carboxyl carrier protein (AccB), biotin carboxylase (AccC) and two subunits each of ACCase subunit alpha (AccA) and ACCase subunit beta (AccD).

Its subcellular location is the cytoplasm. It catalyses the reaction N(6)-carboxybiotinyl-L-lysyl-[protein] + acetyl-CoA = N(6)-biotinyl-L-lysyl-[protein] + malonyl-CoA. The protein operates within lipid metabolism; malonyl-CoA biosynthesis; malonyl-CoA from acetyl-CoA: step 1/1. Functionally, component of the acetyl coenzyme A carboxylase (ACC) complex. Biotin carboxylase (BC) catalyzes the carboxylation of biotin on its carrier protein (BCCP) and then the CO(2) group is transferred by the transcarboxylase to acetyl-CoA to form malonyl-CoA. The chain is Acetyl-coenzyme A carboxylase carboxyl transferase subunit beta from Methylorubrum extorquens (strain CM4 / NCIMB 13688) (Methylobacterium extorquens).